The chain runs to 657 residues: Receptor-type tyrosine-protein phosphatase R (657 aa).

The signal sequence occupies residues 1 to 21 (MRRAVCFPALCLLLNLHAAGC). Residues 22 to 227 (FSGNNDHFLA…EADKIWSKEG (206 aa)) are Extracellular-facing. An O-linked (Xyl...) (chondroitin sulfate) serine glycan is attached at Ser23. N-linked (GlcNAc...) asparagine glycosylation occurs at Asn129. Residues 228–248 (FYAVVIFLSIFVIIVTCLMIL) traverse the membrane as a helical segment. The Cytoplasmic portion of the chain corresponds to 249–657 (YRLKERFQLS…ESRLSAETVQ (409 aa)). Position 272 is a phosphoserine (Ser272). The residue at position 339 (Ser339) is a Phosphoserine; by PKA. The Tyrosine-protein phosphatase domain occupies 393–647 (LQSEFMEIPM…EFVHHALCLY (255 aa)). Substrate contacts are provided by residues Asp554, 588 to 594 (CSAGIGR), and Gln632. The active-site Phosphocysteine intermediate is the Cys588.

This sequence belongs to the protein-tyrosine phosphatase family. Receptor class 7 subfamily. Interacts with MAPKs. In terms of tissue distribution, detected in cerebrospinal fluid (at protein level). Expressed in brain, placenta, small intestine, stomach, uterus and weakly in the prostate. Isoform alpha has been observed only in the brain. Isoform gamma is expressed in brain, placenta and uterus. Isoform delta is expressed in brain, kidney, placenta, prostate, small intestine and uterus.

It is found in the secreted. Its subcellular location is the cell membrane. The protein resides in the cytoplasm. It localises to the perinuclear region. The enzyme catalyses O-phospho-L-tyrosyl-[protein] + H2O = L-tyrosyl-[protein] + phosphate. Functionally, sequesters mitogen-activated protein kinases (MAPKs) such as MAPK1, MAPK3 and MAPK14 in the cytoplasm in an inactive form. The MAPKs bind to a dephosphorylated kinase interacting motif, phosphorylation of which by the protein kinase A complex releases the MAPKs for activation and translocation into the nucleus. The protein is Receptor-type tyrosine-protein phosphatase R (PTPRR) of Homo sapiens (Human).